An 855-amino-acid polypeptide reads, in one-letter code: Circadian locomoter output cycles protein kaput (855 aa).

A Nuclear localization signal motif is present at residues Asp32–Arg47. The region spanning Ala34–His84 is the bHLH domain. A phosphoserine mark is found at Ser38 and Ser42. Lys67 is covalently cross-linked (Glycyl lysine isopeptide (Lys-Gly) (interchain with G-Cter in SUMO1)). PAS domains are found at residues Asn107–Ser177 and Phe262–Gly332. The PAC domain maps to Ser336–Ala379. The segment at Cys371 to Pro854 is interaction with NR3C1. Disordered regions lie at residues Glu392–Arg411 and Ala420–Pro497. Ser408 is subject to Phosphoserine. A Phosphoserine; by GSK3-beta modification is found at Ser427. Phosphoserine is present on Ser431. Residues Asp447–Pro463 show a composition bias toward polar residues. The interaction with SIRT1 stretch occupies residues Ser450–Ser570. Phosphothreonine; by CDK5 occurs at positions 451 and 461. The span at Ser478–Ser493 shows a compositional bias: low complexity. Residues Phe514 to Gln564 are implicated in the circadian rhythmicity. 3 disordered regions span residues Thr613 to Pro650, Gln752 to Pro791, and Ala814 to Gln855. A compositionally biased stretch (low complexity) spans Gln619–Pro650. The segment covering Gln818–Gln837 has biased composition (low complexity). Positions Leu846 to Gln855 are enriched in polar residues. Lys851 is covalently cross-linked (Glycyl lysine isopeptide (Lys-Gly) (interchain with G-Cter in SUMO1)).

Component of the circadian clock oscillator which includes the CRY proteins, CLOCK or NPAS2, BMAL1 or BMAL2, CSNK1D and/or CSNK1E, TIMELESS and the PER proteins. Forms a heterodimer with BMAL1. The CLOCK-BMAL1 heterodimer is required for E-box-dependent transactivation, for CLOCK nuclear translocation and degradation, and for phosphorylation of both CLOCK and BMAL1. Interacts with NR3C1 in a ligand-dependent fashion. Interacts with ESR1 and estrogen stimulates this interaction. Interacts with the complex p35/CDK5. Interacts with RELA/p65. Interacts with KAT2B, CREBBP and EP300. Interacts with ID1 and ID3. Interacts with ID2. Interacts with MTA1. Interacts with OGA. Interacts with SIRT1. Interacts with CIPC. Interacts with EZH2. Interacts with EIF4E, PIWIL1 and DDX4. Interacts with PER1, PER2, CRY1 and CRY2 and this interaction requires a translocation to the nucleus. Interaction of the CLOCK-BMAL1 heterodimer with PER or CRY inhibits transcription activation. Interaction of the CLOCK-BMAL1 with CRY1 is independent of DNA but with PER2 is off DNA. The CLOCK-BMAL1 heterodimer interacts with GSK3B. Interacts with KDM5A. Interacts with KMT2A; in a circadian manner. Interacts with MYBBP1A. Interacts with THRAP3. Interacts with MED1; this interaction requires the presence of THRAP3. Interacts with NCOA2. The CLOCK-BMAL1 heterodimer interacts with PASD1. Interacts with NDUFA9. Interacts with IMPDH2; in a circadian manner. Interacts with ASS1; in a circadian manner. Interacts with PIWIL2 (via PIWI domain). Interacts with HNF4A. Post-translationally, ubiquitinated, leading to its proteasomal degradation. O-glycosylated; contains O-GlcNAc. O-glycosylation by OGT prevents protein degradation by inhibiting ubiquitination. It also stabilizes the CLOCK-BMAL1 heterodimer thereby increasing CLOCK-BMAL1-mediated transcriptional activation of PER1/2/3 and CRY1/2. In terms of processing, phosphorylation is dependent on the CLOCK-BMAL1 heterodimer formation. Phosphorylation enhances the transcriptional activity, alters the subcellular localization and decreases the stability of the heterodimer by promoting its degradation. Phosphorylation shows circadian variations in the liver: the hyperphosphorylated form peaks at midnight (CT18), while the hypophosphorylated form is abundant throughout the day. May be phosphorylated by CSNK1D and CKSN1E. Post-translationally, sumoylation enhances its transcriptional activity and interaction with ESR1, resulting in up-regulation of ESR1 activity. Estrogen stimulates sumoylation. Desumoylation by SENP1 negatively regulates its transcriptional activity. Undergoes lysosome-mediated degradation in a time-dependent manner in the liver. As to expression, expressed equally in brain, eye, testes, ovaries, liver, heart, lung, kidney. In the brain, expression is abundant in the suprachiasmatic nuclei (SCN), in the pyriform cortex, and in the hippocampus. Low expression throughout the rest of the brain. Expression does not appear to undergo circadian oscillations.

It localises to the nucleus. The protein localises to the cytoplasm. The protein resides in the cytosol. It catalyses the reaction L-lysyl-[protein] + acetyl-CoA = N(6)-acetyl-L-lysyl-[protein] + CoA + H(+). Its function is as follows. Transcriptional activator which forms a core component of the circadian clock. The circadian clock, an internal time-keeping system, regulates various physiological processes through the generation of approximately 24 hour circadian rhythms in gene expression, which are translated into rhythms in metabolism and behavior. It is derived from the Latin roots 'circa' (about) and 'diem' (day) and acts as an important regulator of a wide array of physiological functions including metabolism, sleep, body temperature, blood pressure, endocrine, immune, cardiovascular, and renal function. Consists of two major components: the central clock, residing in the suprachiasmatic nucleus (SCN) of the brain, and the peripheral clocks that are present in nearly every tissue and organ system. Both the central and peripheral clocks can be reset by environmental cues, also known as Zeitgebers (German for 'timegivers'). The predominant Zeitgeber for the central clock is light, which is sensed by retina and signals directly to the SCN. The central clock entrains the peripheral clocks through neuronal and hormonal signals, body temperature and feeding-related cues, aligning all clocks with the external light/dark cycle. Circadian rhythms allow an organism to achieve temporal homeostasis with its environment at the molecular level by regulating gene expression to create a peak of protein expression once every 24 hours to control when a particular physiological process is most active with respect to the solar day. Transcription and translation of core clock components (CLOCK, NPAS2, BMAL1, BMAL2, PER1, PER2, PER3, CRY1 and CRY2) plays a critical role in rhythm generation, whereas delays imposed by post-translational modifications (PTMs) are important for determining the period (tau) of the rhythms (tau refers to the period of a rhythm and is the length, in time, of one complete cycle). A diurnal rhythm is synchronized with the day/night cycle, while the ultradian and infradian rhythms have a period shorter and longer than 24 hours, respectively. Disruptions in the circadian rhythms contribute to the pathology of cardiovascular diseases, cancer, metabolic syndromes and aging. A transcription/translation feedback loop (TTFL) forms the core of the molecular circadian clock mechanism. Transcription factors, CLOCK or NPAS2 and BMAL1 or BMAL2, form the positive limb of the feedback loop, act in the form of a heterodimer and activate the transcription of core clock genes and clock-controlled genes (involved in key metabolic processes), harboring E-box elements (5'-CACGTG-3') within their promoters. The core clock genes: PER1/2/3 and CRY1/2 which are transcriptional repressors form the negative limb of the feedback loop and interact with the CLOCK|NPAS2-BMAL1|BMAL2 heterodimer inhibiting its activity and thereby negatively regulating their own expression. This heterodimer also activates nuclear receptors NR1D1/2 and RORA/B/G, which form a second feedback loop and which activate and repress BMAL1 transcription, respectively. Regulates the circadian expression of ICAM1, VCAM1, CCL2, THPO and MPL and also acts as an enhancer of the transactivation potential of NF-kappaB. Plays an important role in the homeostatic regulation of sleep. The CLOCK-BMAL1 heterodimer regulates the circadian expression of SERPINE1/PAI1, VWF, B3, CCRN4L/NOC, NAMPT, DBP, MYOD1, PPARGC1A, PPARGC1B, SIRT1, GYS2, F7, NGFR, GNRHR, BHLHE40/DEC1, ATF4, MTA1, KLF10 and also genes implicated in glucose and lipid metabolism. Promotes rhythmic chromatin opening, regulating the DNA accessibility of other transcription factors. May play a role in spermatogenesis; contributes to the chromatoid body assembly and physiology. The CLOCK-BMAL2 heterodimer activates the transcription of SERPINE1/PAI1 and BHLHE40/DEC1. The preferred binding motif for the CLOCK-BMAL1 heterodimer is 5'-CACGTGA-3', which contains a flanking adenine nucleotide at the 3-prime end of the canonical 6-nucleotide E-box sequence. CLOCK specifically binds to the half-site 5'-CAC-3', while BMAL1 binds to the half-site 5'-GTGA-3'. The CLOCK-BMAL1 heterodimer also recognizes the non-canonical E-box motifs 5'-AACGTGA-3' and 5'-CATGTGA-3'. CLOCK has an intrinsic acetyltransferase activity, which enables circadian chromatin remodeling by acetylating histones and nonhistone proteins, including its own partner BMAL1. Represses glucocorticoid receptor NR3C1/GR-induced transcriptional activity by reducing the association of NR3C1/GR to glucocorticoid response elements (GREs) via the acetylation of multiple lysine residues located in its hinge region. The acetyltransferase activity of CLOCK is as important as its transcription activity in circadian control. Acetylates metabolic enzymes IMPDH2 and NDUFA9 in a circadian manner. Facilitated by BMAL1, rhythmically interacts and acetylates argininosuccinate synthase 1 (ASS1) leading to enzymatic inhibition of ASS1 as well as the circadian oscillation of arginine biosynthesis and subsequent ureagenesis. Drives the circadian rhythm of blood pressure through transcriptional activation of ATP1B1. The polypeptide is Circadian locomoter output cycles protein kaput (Clock) (Mus musculus (Mouse)).